We begin with the raw amino-acid sequence, 386 residues long: Outer membrane protein assembly factor BamB (386 aa).

A signal peptide spans 1 to 20 (MKKLFNQVLVAAGVLALLAG). A lipid anchor (N-palmitoyl cysteine) is attached at Cys21. Cys21 carries S-diacylglycerol cysteine lipidation.

This sequence belongs to the BamB family. Part of the Bam complex.

The protein localises to the cell outer membrane. Part of the outer membrane protein assembly complex, which is involved in assembly and insertion of beta-barrel proteins into the outer membrane. This chain is Outer membrane protein assembly factor BamB, found in Vibrio cholerae serotype O1 (strain ATCC 39315 / El Tor Inaba N16961).